A 270-amino-acid polypeptide reads, in one-letter code: Acyl-[acyl-carrier-protein]--UDP-N-acetylglucosamine O-acyltransferase (270 aa).

Belongs to the transferase hexapeptide repeat family. LpxA subfamily. Homotrimer.

It localises to the cytoplasm. It catalyses the reaction a (3R)-hydroxyacyl-[ACP] + UDP-N-acetyl-alpha-D-glucosamine = a UDP-3-O-[(3R)-3-hydroxyacyl]-N-acetyl-alpha-D-glucosamine + holo-[ACP]. It functions in the pathway glycolipid biosynthesis; lipid IV(A) biosynthesis; lipid IV(A) from (3R)-3-hydroxytetradecanoyl-[acyl-carrier-protein] and UDP-N-acetyl-alpha-D-glucosamine: step 1/6. In terms of biological role, involved in the biosynthesis of lipid A, a phosphorylated glycolipid that anchors the lipopolysaccharide to the outer membrane of the cell. The sequence is that of Acyl-[acyl-carrier-protein]--UDP-N-acetylglucosamine O-acyltransferase from Sinorhizobium fredii (strain NBRC 101917 / NGR234).